A 222-amino-acid polypeptide reads, in one-letter code: Formimidoylglutamase (222 aa).

6 residues coordinate Mn(2+): histidine 34, aspartate 59, histidine 61, aspartate 63, aspartate 150, and aspartate 152.

The protein belongs to the arginase family. Requires Mn(2+) as cofactor.

It catalyses the reaction N-formimidoyl-L-glutamate + H2O = formamide + L-glutamate. It functions in the pathway amino-acid degradation; L-histidine degradation into L-glutamate; L-glutamate from N-formimidoyl-L-glutamate (hydrolase route): step 1/1. Catalyzes the conversion of N-formimidoyl-L-glutamate to L-glutamate and formamide. The polypeptide is Formimidoylglutamase (hutG) (Klebsiella aerogenes (Enterobacter aerogenes)).